A 978-amino-acid chain; its full sequence is Probable serine/threonine-protein kinase PLK (978 aa).

Residues 19-36 show a composition bias toward low complexity; sequence IQIQQQQFKQPQQQPQQK. Disordered regions lie at residues 19–66 and 121–143; these read IQIQ…SSIH and QQQQ…NEPQ. Residues 37–53 show a composition bias toward polar residues; that stretch reads SNSCFSDQENYPANIQP. The segment covering 54 to 64 has biased composition (low complexity); sequence SSSTSSSSSSS. The region spanning 163–416 is the Protein kinase domain; it reads YRQGEFLGKG…LTQILEHDFF (254 aa). ATP contacts are provided by residues 169-177 and lysine 192; that span reads LGKGGFAKC. Aspartate 286 serves as the catalytic Proton acceptor. Disordered regions lie at residues 463-554 and 601-638; these read GTTS…FANL and ENQQ…TVTT. Low complexity-rich tracts occupy residues 473-492 and 500-549; these read HHYQ…NYQQ and INNM…NINN. Coiled-coil stretches lie at residues 497–555 and 592–630; these read KKQI…ANLS and IKQQ…INNN. Positions 696-780 constitute a POLO box 1 domain; that stretch reads YISQYADFTN…IKYFLNHFTN (85 aa). The tract at residues 798–819 is disordered; that stretch reads NNNNNNNVENVTNNNNNNSNNS. A POLO box 2 domain is found at 826–904; it reads YVKKWIKFDN…IYGTLSNNLY (79 aa). The tract at residues 908–978 is disordered; sequence PESSFQQLPQ…SIPQPQLINQ (71 aa). The segment covering 913-978 has biased composition (low complexity); sequence QQLPQQQYQQ…SIPQPQLINQ (66 aa).

This sequence belongs to the protein kinase superfamily. Ser/Thr protein kinase family. CDC5/Polo subfamily.

It catalyses the reaction L-seryl-[protein] + ATP = O-phospho-L-seryl-[protein] + ADP + H(+). It carries out the reaction L-threonyl-[protein] + ATP = O-phospho-L-threonyl-[protein] + ADP + H(+). This Dictyostelium discoideum (Social amoeba) protein is Probable serine/threonine-protein kinase PLK (PLK).